Here is a 121-residue protein sequence, read N- to C-terminus: uncharacterized protein (121 aa).

Residues 101-121 (TVVKKEDVRESPVDTFMENAT) form a disordered region. Over residues 102–112 (VVKKEDVRESP) the composition is skewed to basic and acidic residues.

This is an uncharacterized protein from Schizosaccharomyces pombe (strain 972 / ATCC 24843) (Fission yeast).